The primary structure comprises 460 residues: Probable carboxylesterase 11 (460 aa).

Composition is skewed to polar residues over residues 26–35 and 132–145; these read QSSGDESSSD and NSYGYTTGSSSPEA. Disordered regions lie at residues 26–52 and 132–161; these read QSSGDESSSDPFGVTTRPEESVAAPNP and NSYGYTTGSSSPEAGSSDVYRGYAPSSSGG. The Involved in the stabilization of the negatively charged intermediate by the formation of the oxyanion hole motif lies at 173–175; the sequence is HGG. Residues serine 289, aspartate 392, and histidine 422 contribute to the active site.

Belongs to the 'GDXG' lipolytic enzyme family. In terms of tissue distribution, expressed in roots, leaves, stems, flowers and siliques.

It carries out the reaction a carboxylic ester + H2O = an alcohol + a carboxylate + H(+). In terms of biological role, carboxylesterase acting on esters with varying acyl chain length. This chain is Probable carboxylesterase 11 (CXE11), found in Arabidopsis thaliana (Mouse-ear cress).